Here is a 207-residue protein sequence, read N- to C-terminus: Outer-membrane lipoprotein carrier protein (207 aa).

The N-terminal stretch at 1-21 (MRLFRVLLLSAVAFALSPAQA) is a signal peptide.

It belongs to the LolA family. Monomer.

It is found in the periplasm. Functionally, participates in the translocation of lipoproteins from the inner membrane to the outer membrane. Only forms a complex with a lipoprotein if the residue after the N-terminal Cys is not an aspartate (The Asp acts as a targeting signal to indicate that the lipoprotein should stay in the inner membrane). In Azotobacter vinelandii (strain DJ / ATCC BAA-1303), this protein is Outer-membrane lipoprotein carrier protein.